The chain runs to 609 residues: Glutamine--fructose-6-phosphate aminotransferase [isomerizing] (609 aa).

C2 (nucleophile; for GATase activity) is an active-site residue. The Glutamine amidotransferase type-2 domain occupies 2–218 (CGIVGAIAQR…EGDIAEITRR (217 aa)). 2 SIS domains span residues 286–426 (ADEL…LKGL) and 458–599 (LAED…VDQP). K604 functions as the For Fru-6P isomerization activity in the catalytic mechanism.

Homodimer.

It is found in the cytoplasm. It catalyses the reaction D-fructose 6-phosphate + L-glutamine = D-glucosamine 6-phosphate + L-glutamate. Catalyzes the first step in hexosamine metabolism, converting fructose-6P into glucosamine-6P using glutamine as a nitrogen source. In Escherichia coli O157:H7, this protein is Glutamine--fructose-6-phosphate aminotransferase [isomerizing].